Consider the following 878-residue polypeptide: Fanconi-associated nuclease 1 homolog (878 aa).

The UBZ4-type zinc-finger motif lies at 32–59 (GKTCPLCNIKFSLASYRSHMNVCKVADD). 4 residues coordinate Zn(2+): Cys-35, Cys-38, His-50, and Cys-54. Residues 88 to 180 (ENSGQEIPVN…QKSQSESQEA (93 aa)) form a disordered region. The segment covering 142–161 (SEVRSVEKEIKKSPVWENRR) has biased composition (basic and acidic residues). The span at 168 to 179 (QNSQKSQSESQE) shows a compositional bias: low complexity. Residues Glu-695, Asp-823, Glu-838, and Val-839 each coordinate Mn(2+). The VRR-NUC domain occupies 757-870 (QETIEDNIRR…GIKAEVCHVE (114 aa)).

Belongs to the FAN1 family. Mn(2+) is required as a cofactor. Requires Mg(2+) as cofactor.

The protein localises to the nucleus. The catalysed reaction is Hydrolytically removes 5'-nucleotides successively from the 3'-hydroxy termini of 3'-hydroxy-terminated oligonucleotides.. Nuclease required for the repair of DNA interstrand cross-links (ICL). Acts as a 5'-3' exonuclease that anchors at a cut end of DNA and cleaves DNA successively at every third nucleotide, allowing to excise an ICL from one strand through flanking incisions. This is Fanconi-associated nuclease 1 homolog (fan-1) from Caenorhabditis briggsae.